A 121-amino-acid chain; its full sequence is Cell division protein FtsB (121 aa).

At 1 to 6 the chain is on the cytoplasmic side; that stretch reads MRNWRW. A helical membrane pass occupies residues 7-24; that stretch reads LLLVLAVLLAWLQYRFWF. Over 25-121 the chain is Periplasmic; sequence GPGNSGEVMM…PEPVDPVDHP (97 aa). Positions 31–66 form a coiled coil; sequence EVMMLEAQVAHQTQDNEGLRQRNQALAAEVKDLKDG. Residues 98–121 form a disordered region; the sequence is APASAEASAPAQQAPEPVDPVDHP. The span at 99–113 shows a compositional bias: low complexity; sequence PASAEASAPAQQAPE.

The protein belongs to the FtsB family. In terms of assembly, part of a complex composed of FtsB, FtsL and FtsQ.

The protein resides in the cell inner membrane. Its function is as follows. Essential cell division protein. May link together the upstream cell division proteins, which are predominantly cytoplasmic, with the downstream cell division proteins, which are predominantly periplasmic. The chain is Cell division protein FtsB from Xanthomonas axonopodis pv. citri (strain 306).